The primary structure comprises 154 residues: 6,7-dimethyl-8-ribityllumazine synthase (154 aa).

5-amino-6-(D-ribitylamino)uracil-binding positions include Phe-23, Ala-57–Glu-59, and Ala-81–Ile-83. Position 86 to 87 (Ala-86 to Thr-87) interacts with (2S)-2-hydroxy-3-oxobutyl phosphate. The active-site Proton donor is His-89. Phe-114 contributes to the 5-amino-6-(D-ribitylamino)uracil binding site. Residue Arg-128 participates in (2S)-2-hydroxy-3-oxobutyl phosphate binding.

Belongs to the DMRL synthase family.

The enzyme catalyses (2S)-2-hydroxy-3-oxobutyl phosphate + 5-amino-6-(D-ribitylamino)uracil = 6,7-dimethyl-8-(1-D-ribityl)lumazine + phosphate + 2 H2O + H(+). It functions in the pathway cofactor biosynthesis; riboflavin biosynthesis; riboflavin from 2-hydroxy-3-oxobutyl phosphate and 5-amino-6-(D-ribitylamino)uracil: step 1/2. Catalyzes the formation of 6,7-dimethyl-8-ribityllumazine by condensation of 5-amino-6-(D-ribitylamino)uracil with 3,4-dihydroxy-2-butanone 4-phosphate. This is the penultimate step in the biosynthesis of riboflavin. The sequence is that of 6,7-dimethyl-8-ribityllumazine synthase from Desulforamulus reducens (strain ATCC BAA-1160 / DSM 100696 / MI-1) (Desulfotomaculum reducens).